The primary structure comprises 552 residues: Urocanate hydratase (552 aa).

NAD(+)-binding positions include 49–50, Gln-127, 173–175, Asp-193, 239–240, 260–264, 270–271, and Tyr-319; these read GG, GMG, NA, QTSAH, and YI. The active site involves Cys-407. Gly-489 is an NAD(+) binding site.

This sequence belongs to the urocanase family. It depends on NAD(+) as a cofactor.

It is found in the cytoplasm. It catalyses the reaction 4-imidazolone-5-propanoate = trans-urocanate + H2O. It participates in amino-acid degradation; L-histidine degradation into L-glutamate; N-formimidoyl-L-glutamate from L-histidine: step 2/3. In terms of biological role, catalyzes the conversion of urocanate to 4-imidazolone-5-propionate. This Bacillus cereus (strain G9842) protein is Urocanate hydratase.